A 235-amino-acid polypeptide reads, in one-letter code: Heme oxygenase (235 aa).

Residue histidine 19 participates in heme b binding.

This sequence belongs to the heme oxygenase family.

The protein localises to the plastid. It is found in the chloroplast. It catalyses the reaction heme b + 3 reduced [NADPH--hemoprotein reductase] + 3 O2 = biliverdin IXalpha + CO + Fe(2+) + 3 oxidized [NADPH--hemoprotein reductase] + 3 H2O + H(+). In terms of biological role, catalyzes the opening of the heme ring with the release of iron. Key enzyme in the synthesis of the chromophoric part of the photosynthetic antennae. The polypeptide is Heme oxygenase (pbsA) (Rhodella violacea (Red alga)).